The following is a 193-amino-acid chain: 3-isopropylmalate dehydratase small subunit (193 aa).

This sequence belongs to the LeuD family. LeuD type 1 subfamily. In terms of assembly, heterodimer of LeuC and LeuD.

It carries out the reaction (2R,3S)-3-isopropylmalate = (2S)-2-isopropylmalate. The protein operates within amino-acid biosynthesis; L-leucine biosynthesis; L-leucine from 3-methyl-2-oxobutanoate: step 2/4. Catalyzes the isomerization between 2-isopropylmalate and 3-isopropylmalate, via the formation of 2-isopropylmaleate. In Bacillus cereus (strain AH820), this protein is 3-isopropylmalate dehydratase small subunit.